The chain runs to 615 residues: Peptidoglycan-binding protein YepA (615 aa).

An N-terminal signal peptide occupies residues 1–26 (MRNLAALLPALFLLGSSLLPAGTALA).

Belongs to the bacterial solute-binding protein 5 family. As to quaternary structure, the complex is composed of one ATP-binding protein (YejF), two transmembrane proteins (YejB and YejE) and a solute-binding protein (YepA).

Its subcellular location is the periplasm. Functionally, part of the ABC transporter complex YejBEF-YepA involved in the uptake of muropeptides, the breakdown products of cell wall peptidoglycan. The import of muropeptides into the cell enables peptidoglycan recycling, which is vital for cell wall integrity in this bacterium. Probably binds muropeptides. The sequence is that of Peptidoglycan-binding protein YepA from Agrobacterium fabrum (strain C58 / ATCC 33970) (Agrobacterium tumefaciens (strain C58)).